A 424-amino-acid chain; its full sequence is Tyrosine--tRNA ligase (424 aa).

Y37 provides a ligand contact to L-tyrosine. The 'HIGH' region signature appears at 42-51; sequence ITADSLHVGH. L-tyrosine is bound by residues Y175 and Q179. Positions 235–239 match the 'KMSKS' region motif; that stretch reads KFGKT. An ATP-binding site is contributed by K238. An S4 RNA-binding domain is found at 356–414; sequence GNLQQLLVYSRLALSRSHAKSMIVSNSVRINNIIQNNPFYILCNRDKMYHKYTLLSRGK.

The protein belongs to the class-I aminoacyl-tRNA synthetase family. TyrS type 1 subfamily. In terms of assembly, homodimer.

It is found in the cytoplasm. The enzyme catalyses tRNA(Tyr) + L-tyrosine + ATP = L-tyrosyl-tRNA(Tyr) + AMP + diphosphate + H(+). In terms of biological role, catalyzes the attachment of tyrosine to tRNA(Tyr) in a two-step reaction: tyrosine is first activated by ATP to form Tyr-AMP and then transferred to the acceptor end of tRNA(Tyr). This Buchnera aphidicola subsp. Baizongia pistaciae (strain Bp) protein is Tyrosine--tRNA ligase.